The primary structure comprises 363 residues: MSATLLSAFYDIDLLYKNEKALNNLALSTMLDKKAVGSPVSSTNSNLFPGFLRRHSASNLQALSGSTNPAKFCHNNNNNQLNESAASSTALLNRENKFRDRSFSENGERSQHLLHLQQQQQKAGAQVNSTRYKTELCRPFEESGACKYGEKCQFAHGFHELRSLTRHPKYKTELCRTFHTIGFCPYGPRCHFIHNAEERRQAPGAGERPKLHHSLSFSGFPNHSLDSAPLLESPTSRTPPPQSSGSLYCQELLQLNNNNPCANNAFTFSGQELGLITPLAIHTQNSSYFRQPSSSPPLSFQPLRKVSESPVFDAPPSPPDSLSDRDSYLSGSLSSGSLSGSDSPTLDSNRRLPIFSRLSISDD.

The RNA-binding motif lies at 131-136; that stretch reads RYKTEL. 2 C3H1-type zinc fingers span residues 131 to 159 and 169 to 197; these read RYKT…HGFH and KYKT…HNAE. Positions 148–189 are RNA-binding; that stretch reads YGEKCQFAHGFHELRSLTRHPKYKTELCRTFHTIGFCPYGPR. The segment at 308 to 349 is disordered; sequence ESPVFDAPPSPPDSLSDRDSYLSGSLSSGSLSGSDSPTLDSN. The segment covering 328–347 has biased composition (low complexity); that stretch reads YLSGSLSSGSLSGSDSPTLD.

In terms of processing, phosphorylated. Widely expressed in adults.

It localises to the nucleus. Its subcellular location is the cytoplasm. In terms of biological role, zinc-finger RNA-binding protein that destabilizes several cytoplasmic AU-rich element (ARE)-containing mRNA transcripts by promoting their poly(A) tail removal or deadenylation, and hence provide a mechanism for attenuating protein synthesis. Acts as a 3'-untranslated region (UTR) ARE mRNA-binding adapter protein to communicate signaling events to the mRNA decay machinery. Functions by recruiting the CCR4-NOT deadenylase complex and probably other components of the cytoplasmic RNA decay machinery to the bound ARE-containing mRNAs, and hence promotes ARE-mediated mRNA deadenylation and decay processes. Binds to 3'-UTR ARE of numerous mRNAs. Also induces the degradation of ARE-containing mRNAs even in absence of poly(A) tail. Required for tubulogenesis during pronephros development. The chain is mRNA decay activator protein ZFP36L2-A (zfp36l2-A) from Xenopus laevis (African clawed frog).